The sequence spans 430 residues: DNA polymerase IV 1 (430 aa).

The UmuC domain maps to 45 to 225 (LAHIDCDAFY…KPVTLIWGVG (181 aa)). Mg(2+) contacts are provided by aspartate 49 and aspartate 142. Glutamate 143 is an active-site residue.

The protein belongs to the DNA polymerase type-Y family. As to quaternary structure, monomer. Requires Mg(2+) as cofactor.

The protein localises to the cytoplasm. The enzyme catalyses DNA(n) + a 2'-deoxyribonucleoside 5'-triphosphate = DNA(n+1) + diphosphate. Poorly processive, error-prone DNA polymerase involved in untargeted mutagenesis. Copies undamaged DNA at stalled replication forks, which arise in vivo from mismatched or misaligned primer ends. These misaligned primers can be extended by PolIV. Exhibits no 3'-5' exonuclease (proofreading) activity. May be involved in translesional synthesis, in conjunction with the beta clamp from PolIII. The protein is DNA polymerase IV 1 (dinB1) of Rhizobium meliloti (strain 1021) (Ensifer meliloti).